Reading from the N-terminus, the 301-residue chain is Acetyl-coenzyme A carboxylase carboxyl transferase subunit beta (301 aa).

The region spanning 29 to 298 is the CoA carboxyltransferase N-terminal domain; sequence LWVKCPETGQ…AEPAEEEAEP (270 aa).

The protein belongs to the AccD/PCCB family. As to quaternary structure, acetyl-CoA carboxylase is a heterohexamer composed of biotin carboxyl carrier protein (AccB), biotin carboxylase (AccC) and two subunits each of ACCase subunit alpha (AccA) and ACCase subunit beta (AccD).

It is found in the cytoplasm. It carries out the reaction N(6)-carboxybiotinyl-L-lysyl-[protein] + acetyl-CoA = N(6)-biotinyl-L-lysyl-[protein] + malonyl-CoA. It participates in lipid metabolism; malonyl-CoA biosynthesis; malonyl-CoA from acetyl-CoA: step 1/1. Functionally, component of the acetyl coenzyme A carboxylase (ACC) complex. Biotin carboxylase (BC) catalyzes the carboxylation of biotin on its carrier protein (BCCP) and then the CO(2) group is transferred by the transcarboxylase to acetyl-CoA to form malonyl-CoA. The protein is Acetyl-coenzyme A carboxylase carboxyl transferase subunit beta of Methylobacterium nodulans (strain LMG 21967 / CNCM I-2342 / ORS 2060).